The following is a 218-amino-acid chain: Serine/threonine-protein phosphatase 2 (218 aa).

Mn(2+) contacts are provided by Asp-22, His-24, Asp-51, and Asn-77. His-78 serves as the catalytic Proton donor. His-187 is a binding site for Mn(2+).

Belongs to the PPP phosphatase family. PP-1 subfamily. Requires Mn(2+) as cofactor.

It catalyses the reaction O-phospho-L-seryl-[protein] + H2O = L-seryl-[protein] + phosphate. It carries out the reaction O-phospho-L-threonyl-[protein] + H2O = L-threonyl-[protein] + phosphate. With respect to regulation, inhibited by cadmium, copper, zinc when added activity but with less efficiency. In terms of biological role, can hydrolyze phosphorylated Ser-, Thr- or Tyr-substrates in vitro. The natural substrate is unknown. In Salmonella typhimurium (strain LT2 / SGSC1412 / ATCC 700720), this protein is Serine/threonine-protein phosphatase 2 (pphB).